The following is a 429-amino-acid chain: Histidine--tRNA ligase (429 aa).

It belongs to the class-II aminoacyl-tRNA synthetase family. In terms of assembly, homodimer.

It is found in the cytoplasm. It catalyses the reaction tRNA(His) + L-histidine + ATP = L-histidyl-tRNA(His) + AMP + diphosphate + H(+). The chain is Histidine--tRNA ligase from Streptococcus pneumoniae serotype 4 (strain ATCC BAA-334 / TIGR4).